Here is a 493-residue protein sequence, read N- to C-terminus: Glutamyl-tRNA(Gln) amidotransferase subunit A (493 aa).

Active-site charge relay system residues include Lys78 and Ser158. The Acyl-ester intermediate role is filled by Ser182.

Belongs to the amidase family. GatA subfamily. In terms of assembly, heterotrimer of A, B and C subunits.

It carries out the reaction L-glutamyl-tRNA(Gln) + L-glutamine + ATP + H2O = L-glutaminyl-tRNA(Gln) + L-glutamate + ADP + phosphate + H(+). Its function is as follows. Allows the formation of correctly charged Gln-tRNA(Gln) through the transamidation of misacylated Glu-tRNA(Gln) in organisms which lack glutaminyl-tRNA synthetase. The reaction takes place in the presence of glutamine and ATP through an activated gamma-phospho-Glu-tRNA(Gln). In Rickettsia bellii (strain OSU 85-389), this protein is Glutamyl-tRNA(Gln) amidotransferase subunit A.